A 525-amino-acid polypeptide reads, in one-letter code: Glutamate--cysteine ligase (525 aa).

Belongs to the glutamate--cysteine ligase type 1 family. Type 1 subfamily.

It carries out the reaction L-cysteine + L-glutamate + ATP = gamma-L-glutamyl-L-cysteine + ADP + phosphate + H(+). It participates in sulfur metabolism; glutathione biosynthesis; glutathione from L-cysteine and L-glutamate: step 1/2. This is Glutamate--cysteine ligase from Pseudoalteromonas translucida (strain TAC 125).